A 151-amino-acid polypeptide reads, in one-letter code: Small ribosomal subunit protein bS6 (151 aa).

Residues Glu94–Tyr151 form a disordered region. The segment covering Arg105–Asn144 has biased composition (basic and acidic residues).

This sequence belongs to the bacterial ribosomal protein bS6 family.

In terms of biological role, binds together with bS18 to 16S ribosomal RNA. The polypeptide is Small ribosomal subunit protein bS6 (Beijerinckia indica subsp. indica (strain ATCC 9039 / DSM 1715 / NCIMB 8712)).